The sequence spans 677 residues: DNA-directed RNA polymerase subunit beta' (677 aa).

Residues Cys-69, Cys-71, Cys-87, and Cys-90 each contribute to the Zn(2+) site. Positions 489, 491, and 493 each coordinate Mg(2+).

This sequence belongs to the RNA polymerase beta' chain family. RpoC1 subfamily. In terms of assembly, in plastids the minimal PEP RNA polymerase catalytic core is composed of four subunits: alpha, beta, beta', and beta''. When a (nuclear-encoded) sigma factor is associated with the core the holoenzyme is formed, which can initiate transcription. Mg(2+) serves as cofactor. Zn(2+) is required as a cofactor.

The protein localises to the plastid. It localises to the chloroplast. The enzyme catalyses RNA(n) + a ribonucleoside 5'-triphosphate = RNA(n+1) + diphosphate. Its function is as follows. DNA-dependent RNA polymerase catalyzes the transcription of DNA into RNA using the four ribonucleoside triphosphates as substrates. This is DNA-directed RNA polymerase subunit beta' from Daucus carota (Wild carrot).